We begin with the raw amino-acid sequence, 96 residues long: Protein YdfX (96 aa).

This chain is Protein YdfX (ydfX), found in Escherichia coli (strain K12).